A 1537-amino-acid chain; its full sequence is Dicer-like protein 1 (1537 aa).

The disordered stretch occupies residues 38–68; sequence SDPAESSVDVQDEHSSDDSDNENEVFPKQND. One can recognise a Helicase ATP-binding domain in the interval 133-314; sequence LFERAKTQNT…EAATRLETFL (182 aa). Position 146–153 (146–153) interacts with ATP; it reads LDTGSGKT. The short motif at 259 to 262 is the DEAH box element; sequence DEAH. The Helicase C-terminal domain occupies 459–618; the sequence is ELSKHFNDTT…EILPEDRILH (160 aa). A Dicer dsRNA-binding fold domain is found at 651–741; the sequence is AIAILARYAS…NSIYHRRLPA (91 aa). The PAZ domain maps to 891–1019; the sequence is DTVSFVHNND…ICAEPLRISA (129 aa). 2 consecutive RNase III domains span residues 1043 to 1202 and 1253 to 1405; these read IALE…LSGG and ARHV…VDSK. Residues glutamate 1294, aspartate 1391, and glutamate 1394 each contribute to the Mg(2+) site. Residues 1439–1507 form the DRBM domain; that stretch reads TFLHNKLTNE…SEKALAVLDG (69 aa). 4 residues coordinate Zn(2+): cysteine 1451, histidine 1478, cysteine 1519, and cysteine 1521.

The protein belongs to the helicase family. Dicer subfamily. The cofactor is Mg(2+). Mn(2+) is required as a cofactor.

Functionally, dicer-like endonuclease involved in cleaving double-stranded RNA in the RNA interference (RNAi) pathway. Produces 21 to 25 bp dsRNAs (siRNAs) which target the selective destruction of homologous RNAs leading to sequence-specific suppression of gene expression, called post-transcriptional gene silencing (PTGS). Part of a broad host defense response against viral infection and transposons. The sequence is that of Dicer-like protein 1 (dcl1) from Aspergillus fumigatus (strain ATCC MYA-4609 / CBS 101355 / FGSC A1100 / Af293) (Neosartorya fumigata).